Consider the following 397-residue polypeptide: Argininosuccinate synthase (397 aa).

9–17 (AYSGGLDTS) contributes to the ATP binding site. An L-citrulline-binding site is contributed by Tyr-87. Position 117 (Gly-117) interacts with ATP. Residues Thr-119, Asn-123, and Asp-124 each contribute to the L-aspartate site. Asn-123 provides a ligand contact to L-citrulline. Residues Arg-127, Ser-175, Ser-184, Glu-257, and Tyr-269 each coordinate L-citrulline.

Belongs to the argininosuccinate synthase family. Type 1 subfamily. In terms of assembly, homotetramer.

The protein localises to the cytoplasm. The catalysed reaction is L-citrulline + L-aspartate + ATP = 2-(N(omega)-L-arginino)succinate + AMP + diphosphate + H(+). The protein operates within amino-acid biosynthesis; L-arginine biosynthesis; L-arginine from L-ornithine and carbamoyl phosphate: step 2/3. In Dictyoglomus turgidum (strain DSM 6724 / Z-1310), this protein is Argininosuccinate synthase.